Here is a 352-residue protein sequence, read N- to C-terminus: Nuclear receptor subfamily 1 group I member 3 (352 aa).

The segment at residues 8–83 (LRNCVVCGDQ…AGMRKDMILS (76 aa)) is a DNA-binding region (nuclear receptor). The NR C4-type zinc-finger motif lies at 11–31 (CVVCGDQATGYHFNALTCEGC). Phosphothreonine; by PKC is present on threonine 38. The NR C4-type zinc-finger motif lies at 47–71 (CPFAGSCEVSKTQRRHCPACRLQKC). The NR LBD domain maps to 109-352 (EQEELIRTLL…MMPLLQEICS (244 aa)).

This sequence belongs to the nuclear hormone receptor family. NR1 subfamily. Interacts with ECT2. Heterodimer of NR1I3 and RXR. Interacts with PSMC4. Directly interacts with DNAJC7. The DNAJC7-NR1I3 complex may also include HSP90. Interacts with CRY1. Interacts with CRY2 in a ligand-dependent manner. Phosphorylated at Thr-38 by PKC, dephosphorylation of Thr-38 is required for nuclear translocation and activation. In terms of tissue distribution, predominantly expressed in liver.

Its subcellular location is the nucleus. The protein localises to the cytoplasm. The protein resides in the cytoskeleton. Its function is as follows. Binds and transactivates the retinoic acid response elements that control expression of the retinoic acid receptor beta 2 and alcohol dehydrogenase 3 genes. Transactivates both the phenobarbital responsive element module of the human CYP2B6 gene and the CYP3A4 xenobiotic response element. The sequence is that of Nuclear receptor subfamily 1 group I member 3 (NR1I3) from Homo sapiens (Human).